A 419-amino-acid chain; its full sequence is Putative nickel insertion protein (419 aa).

Residues 69 to 90 (HDPSNHPSQNTHHHHHHHTRHL) form a disordered region. Residues 79 to 88 (THHHHHHHTR) show a composition bias toward basic residues.

Belongs to the LarC family.

This Rippkaea orientalis (strain PCC 8801 / RF-1) (Cyanothece sp. (strain PCC 8801)) protein is Putative nickel insertion protein.